The following is a 1431-amino-acid chain: DNA-directed RNA polymerase subunit beta' (1431 aa).

The Zn(2+) site is built by Cys66, Cys68, Cys81, and Cys84. Residues Asp470, Asp472, and Asp474 each coordinate Mg(2+). Residues Cys813, Cys887, Cys894, and Cys897 each contribute to the Zn(2+) site.

The protein belongs to the RNA polymerase beta' chain family. The RNAP catalytic core consists of 2 alpha, 1 beta, 1 beta' and 1 omega subunit. When a sigma factor is associated with the core the holoenzyme is formed, which can initiate transcription. Mg(2+) is required as a cofactor. It depends on Zn(2+) as a cofactor.

The enzyme catalyses RNA(n) + a ribonucleoside 5'-triphosphate = RNA(n+1) + diphosphate. DNA-dependent RNA polymerase catalyzes the transcription of DNA into RNA using the four ribonucleoside triphosphates as substrates. This chain is DNA-directed RNA polymerase subunit beta', found in Parabacteroides distasonis (strain ATCC 8503 / DSM 20701 / CIP 104284 / JCM 5825 / NCTC 11152).